Reading from the N-terminus, the 138-residue chain is Histone H3-like centromeric protein A (138 aa).

Residues 1–40 (MGPRRQKRKPETPRRRPASPAPAAPRPTPSLGTSSRPLAR) are disordered. A N,N,N-trimethylglycine modification is found at Gly2. Residue Ser19 is modified to Phosphoserine. A compositionally biased stretch (pro residues) spans 19–28 (SPAPAAPRPT). The important for flexibility of DNA ends that protrude from nucleosomes stretch occupies residues 37–52 (PLARRRHTVLKEIRTL). The interval 39 to 138 (ARRRHTVLKE…RIRGIQEGLG (100 aa)) is H3-like. The CATD stretch occupies residues 73–114 (CVQFTRGVDFNWQAQALLALQEAAEAFLVHLFEDAYLLSLHA).

Belongs to the histone H3 family. In terms of assembly, component of centromeric nucleosomes, where DNA is wrapped around a histone octamer core. The octamer contains two molecules each of H2A, H2B, CENPA and H4 assembled in one CENPA-H4 heterotetramer and two H2A-H2B heterodimers. CENPA modulates the DNA-binding characteristics of nucleosomes so that protruding DNA ends have higher flexibility than in nucleosomes containing conventional histone H3. Inhibits binding of histone H1 to nucleosomes, since histone H1 binds preferentially to rigid DNA linkers that protrude from nucleosomes. Nucleosomes containing CENPA also contain histone H2A variants such as MACROH2A and H2A.Z/H2AZ1. The CENPA-H4 heterotetramer is more compact and structurally more rigid than corresponding H3-H4 heterotetramers. Can assemble into nucleosomes that contain both CENPA and histone H3.3; these nucleosomes interact with a single CENPC chain. Heterotrimer composed of HJURP, CENPA and histone H4, where HJURP interacts with the dimer formed by CENPA and histone H4 and prevents tetramerization of CENPA and H4. Component of the CENPA-NAC complex, at least composed of CENPA, CENPC, CENPH, CENPM, CENPN, CENPT and CENPU. Interacts (via CATD domain) with HJURP; the interaction is direct and is required for its localization to centromeres. Interacts with CENPC, CENPN and CENPT; interaction is direct. Part of a centromere complex consisting of CENPA, CENPT and CENPW. Identified in centromere complexes containing histones H2A, H2B and H4, and at least CENPA, CENPB, CENPC, CENPT, CENPN, HJURP, SUPT16H, SSRP1 and RSF1. Can self-associate. The CENPA-H4 heterotetramer can bind DNA by itself (in vitro). Interacts with CDK1, PPP1CA and RBBP7. In terms of processing, trimethylated by NTMT1 at the N-terminal glycine after cleavage of Met-1. Methylation is low before incorporation into nucleosomes and increases with cell cycle progression, with the highest levels in mitotic nucleosomes. Poly-ADP-ribosylated by PARP1.

It is found in the nucleus. The protein localises to the chromosome. It localises to the centromere. Histone H3-like nucleosomal protein that is specifically found in centromeric nucleosomes. Replaces conventional H3 in the nucleosome core of centromeric chromatin that serves as an assembly site for the inner kinetochore. The presence of CENPA subtly modifies the nucleosome structure and the way DNA is wrapped around the nucleosome and gives rise to protruding DNA ends that are less well-ordered and rigid compared to nucleosomes containing histone H3. May serve as an epigenetic mark that propagates centromere identity through replication and cell division. Required for recruitment and assembly of kinetochore proteins, and as a consequence required for progress through mitosis, chromosome segregation and cytokinesis. This chain is Histone H3-like centromeric protein A (CENPA), found in Bos taurus (Bovine).